The sequence spans 37 residues: Dolichyl-diphosphooligosaccharide--protein glycosyltransferase subunit 4B (37 aa).

The Lumenal segment spans residues 1 to 8 (MFDDQDLG). The helical transmembrane segment at 9–29 (FFANFLGIFIFVLVMAYHFVM) threads the bilayer. The Cytoplasmic portion of the chain corresponds to 30 to 37 (ADVKYEGN).

It belongs to the OST4 family. As to quaternary structure, component of the oligosaccharyltransferase (OST) complex.

The protein localises to the endoplasmic reticulum membrane. In terms of biological role, subunit of the oligosaccharyl transferase (OST) complex that catalyzes the initial transfer of a defined glycan (Glc(3)Man(9)GlcNAc(2) in eukaryotes) from the lipid carrier dolichol-pyrophosphate to an asparagine residue within an Asn-X-Ser/Thr consensus motif in nascent polypeptide chains, the first step in protein N-glycosylation. N-glycosylation occurs cotranslationally and the complex associates with the Sec61 complex at the channel-forming translocon complex that mediates protein translocation across the endoplasmic reticulum (ER). All subunits are required for a maximal enzyme activity. In Oryza sativa subsp. japonica (Rice), this protein is Dolichyl-diphosphooligosaccharide--protein glycosyltransferase subunit 4B (OST4B).